The following is a 293-amino-acid chain: ATP synthase subunit a (293 aa).

The next 6 membrane-spanning stretches (helical) occupy residues 40 to 60, 98 to 118, 151 to 171, 188 to 208, 225 to 245, and 264 to 284; these read DSLF…WLAA, FVAP…ALDL, DLNV…YYGI, FHAH…LNLI, MFAG…WTGF, and AIFH…LTLV.

The protein belongs to the ATPase A chain family. In terms of assembly, F-type ATPases have 2 components, CF(1) - the catalytic core - and CF(0) - the membrane proton channel. CF(1) has five subunits: alpha(3), beta(3), gamma(1), delta(1), epsilon(1). CF(0) has three main subunits: a(1), b(2) and c(9-12). The alpha and beta chains form an alternating ring which encloses part of the gamma chain. CF(1) is attached to CF(0) by a central stalk formed by the gamma and epsilon chains, while a peripheral stalk is formed by the delta and b chains.

The protein localises to the cell inner membrane. Its function is as follows. Key component of the proton channel; it plays a direct role in the translocation of protons across the membrane. The chain is ATP synthase subunit a from Bordetella avium (strain 197N).